A 437-amino-acid polypeptide reads, in one-letter code: Vacuolar cation/proton exchanger 2 (437 aa).

Positions 1-29 are disordered; that stretch reads MMGAEKAEGMEELELEEGGGSPSPSPMTA. Over 1–65 the chain is Cytoplasmic; that stretch reads MMGAEKAEGM…KWRRALTSVR (65 aa). A helical membrane pass occupies residues 66 to 86; sequence VVILQAKINVLLPFGPLAVML. The Extracellular portion of the chain corresponds to 87-88; the sequence is HY. A helical membrane pass occupies residues 89–109; it reads LSANHQGWVFLFSLIGITPLA. The Cytoplasmic segment spans residues 110–126; sequence ERLGYATEQLALYTGPT. A helical transmembrane segment spans residues 127–147; that stretch reads IGGLLNATFGNATEMIISLYA. The cation selection stretch occupies residues 136–171; sequence GNATEMIISLYALKNGMIRVVQQSLLGSILSNMLLV. Residues 148–161 lie on the Extracellular side of the membrane; the sequence is LKNGMIRVVQQSLL. A helical membrane pass occupies residues 162–182; that stretch reads GSILSNMLLVLGCAFFAGGLV. Over 183–194 the chain is Cytoplasmic; sequence HPSRDQVFNKAS. Residues 195–215 form a helical membrane-spanning segment; sequence AVVNSGLLLMAVLGLMFPAVL. The Extracellular segment spans residues 216 to 228; sequence HFTHSEVQYGKSE. The chain crosses the membrane as a helical span at residues 229-249; the sequence is VSLSRFSSCIMLVAYASYLFF. The Cytoplasmic segment spans residues 250–281; the sequence is QLKSQRSLYSPIGEQEEEVTEDEEEEKEITQG. The chain crosses the membrane as a helical span at residues 282 to 302; sequence EAICWLFVLTIWISILSGYLV. At 303-310 the chain is on the extracellular side; the sequence is DAIQGASE. The helical transmembrane segment at 311–331 threads the bilayer; sequence SLNMPVAFISVILLPIVGNAA. Residues 328–363 form a cation selection region; it reads GNAAEHASAIMFAMKDKLDITLGVAIGSSTQISMFV. Topologically, residues 332–352 are cytoplasmic; that stretch reads EHASAIMFAMKDKLDITLGVA. A helical membrane pass occupies residues 353 to 373; that stretch reads IGSSTQISMFVIPFCVVIGWI. At 374-379 the chain is on the extracellular side; that stretch reads MGQQMD. A helical membrane pass occupies residues 380–400; it reads LNFQLFETATLFITVLVVAFM. Over 401-408 the chain is Cytoplasmic; sequence LQEGTSNY. A helical transmembrane segment spans residues 409–429; the sequence is FKGLMLILCYLIVAASFFVHV. Topologically, residues 430-437 are extracellular; that stretch reads DPDSSNNK.

Belongs to the Ca(2+):cation antiporter (CaCA) (TC 2.A.19) family. Cation/proton exchanger (CAX) subfamily. Expressed in roots and shoots.

The protein resides in the vacuole membrane. Its function is as follows. Vacuolar cation/proton exchanger (CAX). Translocates Ca(2+) and other metal ions into vacuoles using the proton gradient formed by H(+)-ATPase and H(+)-pyrophosphatase. In Oryza sativa subsp. japonica (Rice), this protein is Vacuolar cation/proton exchanger 2 (CAX2).